The following is a 273-amino-acid chain: MFGFPTATLLDCHGRYAQNVAFFNVMTEAHHKYDHSEATGSSSWDIQNSFRREKLEQKSPDSKTLQEDSPGVRQRVYECQECGKSFRQKGSLTLHERIHTGQKPFECTHCGKSFRAKGNLVTHQRIHTGEKPYQCKECGKSFSQRGSLAVHERLHTGQKPYECAICQRSFRNQSNLAVHRRVHSGEKPYRCDQCGKAFSQKGSLIVHIRVHTGLKPYACTQCRKSFHTRGNCILHGKIHTGETPYLCGQCGKSFTQRGSLAVHQRSCSQRLTL.

3 C2H2-type zinc fingers span residues 77-99, 105-127, and 133-155; these read YECQECGKSFRQKGSLTLHERIH, FECTHCGKSFRAKGNLVTHQRIH, and YQCKECGKSFSQRGSLAVHERLH. The Zn(2+) site is built by Cys-79, Cys-82, His-95, His-99, Cys-107, Cys-110, His-123, His-127, Ser-141, Gln-144, Gly-157, Tyr-161, Phe-198, Lys-201, Leu-214, Ala-218, Cys-247, Cys-250, His-263, and Cys-267. 2 consecutive C2H2-type zinc fingers follow at residues 161-183 and 189-211; these read YECAICQRSFRNQSNLAVHRRVH and YRCDQCGKAFSQKGSLIVHIRVH. The C2H2-type 6 zinc finger occupies 217-239; that stretch reads YACTQCRKSFHTRGNCILHGKIH. The CCHC-type zinc finger occupies 245–267; the sequence is YLCGQCGKSFTQRGSLAVHQRSC.

The protein belongs to the krueppel C2H2-type zinc-finger protein family.

Its subcellular location is the nucleus. In terms of biological role, may be involved in transcriptional regulation. In Homo sapiens (Human), this protein is Zinc finger protein 32 (ZNF32).